The following is a 46-amino-acid chain: Defensin-like protein AX1 (46 aa).

4 disulfides stabilise this stretch: C3–C46, C14–C34, C20–C40, and C24–C42.

Leaves and flowers.

Its function is as follows. Strong inhibiting activity against C.beticola and other filamentous fungi. Little or no effect against bacteria. The polypeptide is Defensin-like protein AX1 (Beta vulgaris (Sugar beet)).